A 790-amino-acid chain; its full sequence is Disintegrin and metalloproteinase domain-containing protein 30 (790 aa).

The signal sequence occupies residues 1 to 27 (MRSVQIFLSQCRLLLLLVPTMLLKSLG). A propeptide spanning residues 28-198 (EDVIFHPEGE…KARLRDFPGS (171 aa)) is cleaved from the precursor. A Cysteine switch motif is present at residues 170–177 (QVCGLSDD). Cys-172 is a Zn(2+) binding site. Over 199 to 687 (YKHPKYLELI…LRGAIPSSIW (489 aa)) the chain is Extracellular. The Peptidase M12B domain occupies 203–393 (KYLELILLFD…SGATCLNNIP (191 aa)). Residue Asn-222 is glycosylated (N-linked (GlcNAc...) asparagine). 3 cysteine pairs are disulfide-bonded: Cys-313/Cys-388, Cys-353/Cys-373, and Cys-355/Cys-361. His-338 provides a ligand contact to Zn(2+). Glu-339 is an active-site residue. His-342 and His-348 together coordinate Zn(2+). Asn-372, Asn-438, Asn-473, and Asn-625 each carry an N-linked (GlcNAc...) asparagine glycan. Residues 399-485 (LKRCGNKIVE…SCPNDVYKQD (87 aa)) form the Disintegrin domain. Cys-457 and Cys-477 are joined by a disulfide. Positions 629-663 (LQFDCLPEKCNTRGVCNNRKNCHCMYGWAPPFCEE) constitute an EGF-like domain. 3 disulfide bridges follow: Cys-633-Cys-644, Cys-638-Cys-650, and Cys-652-Cys-661. A helical transmembrane segment spans residues 688–708 (VVSIIMFRLILLILSVVFVFF). The Cytoplasmic portion of the chain corresponds to 709-790 (RQVIGNHLKP…KAKSVKKQKK (82 aa)). Basic and acidic residues predominate over residues 720–779 (QEKMPLSKAKTEQEESKTKTVQEESKTKTGQEESEAKTGQEESKAKTGQEESKANIESKR). The disordered stretch occupies residues 720–790 (QEKMPLSKAK…KAKSVKKQKK (71 aa)). 5 tandem repeats follow at residues 732–740 (QEESKTKTV), 741–749 (QEESKTKTG), 750–758 (QEESEAKTG), 759–767 (QEESKAKTG), and 768–776 (QEESKANIE). A 5 X 9 AA approximate repeats region spans residues 732–776 (QEESKTKTVQEESKTKTGQEESEAKTGQEESKAKTGQEESKANIE). The span at 780–790 (PKAKSVKKQKK) shows a compositional bias: basic residues.

As to quaternary structure, interacts with CTSD; this leads to activation of CTSD. Zn(2+) serves as cofactor. As to expression, expressed in brain neurons (at protein level). Expressed in testis.

It localises to the late endosome membrane. Its function is as follows. Plays a role in lysosomal amyloid precursor protein (APP) processing by cleaving and activating CTSD/cathepsin D which leads to APP degradation. The polypeptide is Disintegrin and metalloproteinase domain-containing protein 30 (ADAM30) (Homo sapiens (Human)).